The following is a 242-amino-acid chain: Probable transcriptional regulatory protein Bphy_2064 (242 aa).

It belongs to the TACO1 family.

It localises to the cytoplasm. This Paraburkholderia phymatum (strain DSM 17167 / CIP 108236 / LMG 21445 / STM815) (Burkholderia phymatum) protein is Probable transcriptional regulatory protein Bphy_2064.